A 156-amino-acid chain; its full sequence is Ribosome maturation factor RimP (156 aa).

It belongs to the RimP family.

Its subcellular location is the cytoplasm. Required for maturation of 30S ribosomal subunits. The polypeptide is Ribosome maturation factor RimP (Lachnospira eligens (strain ATCC 27750 / DSM 3376 / VPI C15-48 / C15-B4) (Eubacterium eligens)).